The primary structure comprises 615 residues: Zinc metalloproteinase R519 (615 aa).

A Peptidase M13 domain is found at 1–611; the sequence is MTYRSCIPQN…LDPQLRSRIL (611 aa). His454 is a binding site for Zn(2+). The active site involves Glu455. Residues His458 and Glu513 each coordinate Zn(2+). Asp517 acts as the Proton donor in catalysis.

This sequence belongs to the peptidase M13 family. Zn(2+) serves as cofactor.

In terms of biological role, zinc metalloprotease. In Acanthamoeba polyphaga (Amoeba), this protein is Zinc metalloproteinase R519.